Consider the following 411-residue polypeptide: Calmodulin-binding receptor-like cytoplasmic kinase 2 (411 aa).

Disordered regions lie at residues 1–44 and 66–99; these read MPSR…DTTT and SNYI…YGNA. 2 stretches are compositionally biased toward low complexity: residues 16–44 and 66–95; these read TTSS…DTTT and SNYI…VQRS. Thr-108 carries the post-translational modification Phosphothreonine. In terms of domain architecture, Protein kinase spans 119–398; it reads FSPSFRIGQG…MKKCSEILWG (280 aa). ATP contacts are provided by residues 125 to 133 and Lys-147; that span reads IGQGGFGTV. A caM-binding region spans residues 134–159; it reads YKVKLRDGKTFAVKRAKKSMHDDRQG. The Proton acceptor role is filled by Asp-247. Phosphoserine is present on residues Ser-251 and Ser-283. 2 positions are modified to phosphothreonine: Thr-284 and Thr-289. At Tyr-297 the chain carries Phosphotyrosine.

The protein belongs to the protein kinase superfamily. Ser/Thr protein kinase family. As to quaternary structure, interacts with calmodulin (CaM) in a Ca(2+)-dependent manner.

The protein resides in the cytoplasm. It carries out the reaction L-seryl-[protein] + ATP = O-phospho-L-seryl-[protein] + ADP + H(+). The catalysed reaction is L-threonyl-[protein] + ATP = O-phospho-L-threonyl-[protein] + ADP + H(+). The protein is Calmodulin-binding receptor-like cytoplasmic kinase 2 (CRCK2) of Arabidopsis thaliana (Mouse-ear cress).